Here is a 261-residue protein sequence, read N- to C-terminus: NAD kinase (261 aa).

The active-site Proton acceptor is Asp54. Residues 54–55 (DG), 123–124 (ND), Arg150, Asp152, and 163–168 (TAYSLS) each bind NAD(+).

It belongs to the NAD kinase family. A divalent metal cation serves as cofactor.

Its subcellular location is the cytoplasm. The enzyme catalyses NAD(+) + ATP = ADP + NADP(+) + H(+). In terms of biological role, involved in the regulation of the intracellular balance of NAD and NADP, and is a key enzyme in the biosynthesis of NADP. Catalyzes specifically the phosphorylation on 2'-hydroxyl of the adenosine moiety of NAD to yield NADP. In Caldicellulosiruptor bescii (strain ATCC BAA-1888 / DSM 6725 / KCTC 15123 / Z-1320) (Anaerocellum thermophilum), this protein is NAD kinase.